The chain runs to 104 residues: Large ribosomal subunit protein uL24 (104 aa).

It belongs to the universal ribosomal protein uL24 family. In terms of assembly, part of the 50S ribosomal subunit.

In terms of biological role, one of two assembly initiator proteins, it binds directly to the 5'-end of the 23S rRNA, where it nucleates assembly of the 50S subunit. One of the proteins that surrounds the polypeptide exit tunnel on the outside of the subunit. The chain is Large ribosomal subunit protein uL24 from Brevibacillus brevis (strain 47 / JCM 6285 / NBRC 100599).